The sequence spans 205 residues: ATP phosphoribosyltransferase (205 aa).

The protein belongs to the ATP phosphoribosyltransferase family. Short subfamily. As to quaternary structure, heteromultimer composed of HisG and HisZ subunits.

Its subcellular location is the cytoplasm. It catalyses the reaction 1-(5-phospho-beta-D-ribosyl)-ATP + diphosphate = 5-phospho-alpha-D-ribose 1-diphosphate + ATP. It functions in the pathway amino-acid biosynthesis; L-histidine biosynthesis; L-histidine from 5-phospho-alpha-D-ribose 1-diphosphate: step 1/9. Functionally, catalyzes the condensation of ATP and 5-phosphoribose 1-diphosphate to form N'-(5'-phosphoribosyl)-ATP (PR-ATP). Has a crucial role in the pathway because the rate of histidine biosynthesis seems to be controlled primarily by regulation of HisG enzymatic activity. This Staphylococcus carnosus (strain TM300) protein is ATP phosphoribosyltransferase.